The primary structure comprises 189 residues: Elongation factor P (189 aa).

Belongs to the elongation factor P family.

Its subcellular location is the cytoplasm. Its pathway is protein biosynthesis; polypeptide chain elongation. Its function is as follows. Involved in peptide bond synthesis. Stimulates efficient translation and peptide-bond synthesis on native or reconstituted 70S ribosomes in vitro. Probably functions indirectly by altering the affinity of the ribosome for aminoacyl-tRNA, thus increasing their reactivity as acceptors for peptidyl transferase. This is Elongation factor P from Campylobacter jejuni subsp. doylei (strain ATCC BAA-1458 / RM4099 / 269.97).